A 374-amino-acid chain; its full sequence is Aminomethyltransferase (374 aa).

The protein belongs to the GcvT family. In terms of assembly, the glycine cleavage system is composed of four proteins: P, T, L and H.

It catalyses the reaction N(6)-[(R)-S(8)-aminomethyldihydrolipoyl]-L-lysyl-[protein] + (6S)-5,6,7,8-tetrahydrofolate = N(6)-[(R)-dihydrolipoyl]-L-lysyl-[protein] + (6R)-5,10-methylene-5,6,7,8-tetrahydrofolate + NH4(+). Functionally, the glycine cleavage system catalyzes the degradation of glycine. The sequence is that of Aminomethyltransferase from Caldanaerobacter subterraneus subsp. tengcongensis (strain DSM 15242 / JCM 11007 / NBRC 100824 / MB4) (Thermoanaerobacter tengcongensis).